The sequence spans 574 residues: Fusion glycoprotein F0 (574 aa).

A signal peptide spans Met-1–Ser-25. At Gln-26–Asn-524 the chain is on the extracellular side. 2 N-linked (GlcNAc...) asparagine; by host glycosylation sites follow: Asn-27 and Asn-70. 7 disulfides stabilise this stretch: Cys-37–Cys-439, Cys-69–Cys-212, Cys-313–Cys-343, Cys-322–Cys-333, Cys-358–Cys-367, Cys-382–Cys-393, and Cys-416–Cys-422. A coiled-coil region spans residues Val-76–Leu-96. Asn-116, Asn-120, and Asn-126 each carry an N-linked (GlcNAc...) asparagine; by host glycan. The interval Phe-137 to Val-157 is fusion peptide. Residues Ala-153–Lys-209 adopt a coiled-coil conformation. Residues Leu-481–Val-516 are a coiled coil. Residue Asn-500 is glycosylated (N-linked (GlcNAc...) asparagine; by host). The chain crosses the membrane as a helical span at residues Ile-525–Cys-550. A lipid anchor (S-palmitoyl cysteine; by host) is attached at Cys-550. The Cytoplasmic portion of the chain corresponds to Lys-551–Asn-574.

The protein belongs to the paramyxoviruses fusion glycoprotein family. Homotrimer. Heterodimer with fusion protein F2; disulfide-linked. Interacts with host NCL; this interaction plays a role in viral entry into the host cell. As a heterodimer with F2, interacts with host heparan sulfate. As a heterodimer with F2, interacts with host IGF1R; this interaction activates PRKCZ/PKCzeta that recruits NCL/nucleolin from the host nucleus to the plasma membrane. Part of a complex composed of F1, F2 and G glycoproteins. As a heterodimer with F2, interacts with host RHOA; this interaction facilitates virus-induced syncytium formation. As to quaternary structure, homotrimer. Heterodimer with fusion protein F1; disulfide-linked. As a heterodimer with F1, interacts with host heparan sulfate. As a heterodimer with F1, interacts with host IGF1R; this interaction activates PRKCZ/PKCzeta that recruits NCL/nucleolin from the host nucleus to the plasma membrane. Part of a complex composed of F1, F2 and G glycoproteins. As a heterodimer with F1, interacts with host RHOA; this interaction facilitates virus-induced syncytium formation. Post-translationally, the F glycoprotein is synthesized as a F0 inactive precursor that is heavily N-glycosylated and processed at two sites by a host furin-like protease probably in the Golgi. The cleavage site between p27 and F1 may occur after endocytosis to yield the mature F1 and F2 proteins. Both cleavages are required for membrane fusion and p27 is released from the processed protein.

Its subcellular location is the host Golgi apparatus membrane. The protein localises to the virion membrane. The protein resides in the host cell membrane. Functionally, inactive precursor that is cleaved at two sites by a furin-like protease to give rise to the mature F1 and F2 fusion glycoproteins. Class I viral fusion protein. Under the current model, the protein has at least 3 conformational states: pre-fusion native state, pre-hairpin intermediate state, and post-fusion hairpin state. During viral and plasma cell membrane fusion, the coiled coil regions assume a trimer-of-hairpins structure, positioning the fusion peptide in close proximity to the C-terminal region of the ectodomain. The formation of this structure appears to drive apposition and subsequent fusion of viral and cellular membranes leading to delivery of the nucleocapsid into the cytoplasm. This fusion is pH independent and occurs at the plasma or endosomal membrane. The trimer of F1-F2 (F protein) also facilitates the attachment to host cell by binding to host heparan sulfate. F protein is involved in the entry into the host cell through the interaction with host IGF1R. This interaction activates PRKCZ/PKCzeta that recruits host NCL/nucleolin to the apical cell surface where it can bind fusion glycoprotein F1. Later in infection, F protein expressed at the plasma membrane of infected cells can mediate fusion with adjacent cells to form syncytia, a cytopathic effect that could lead to tissue necrosis. F protein may trigger p53-dependent apoptosis. Its function is as follows. Major determinant of the species specificity of RSV infection. The trimer of F1-F2 (F protein) also facilitates the attachment to host cell by binding to host heparan sulfate. F protein is involved in the entry into the host cell through the interaction with host IGF1R. This interaction activates PRKCZ/PKCzeta that recruits host NCL/nucleolin to the apical cell surface where it can bind fusion glycoprotein F1. Later in infection, F protein expressed at the plasma membrane of infected cells can mediate fusion with adjacent cells to form syncytia, a cytopathic effect that could lead to tissue necrosis. F protein seems to trigger p53-dependent apoptosis. The chain is Fusion glycoprotein F0 (F) from Human respiratory syncytial virus A (strain RSS-2).